The sequence spans 175 residues: ATP-dependent protease subunit HslV (175 aa).

The active site involves Thr2. Residues Ala156, Cys159, and Thr162 each contribute to the Na(+) site.

Belongs to the peptidase T1B family. HslV subfamily. A double ring-shaped homohexamer of HslV is capped on each side by a ring-shaped HslU homohexamer. The assembly of the HslU/HslV complex is dependent on binding of ATP.

The protein resides in the cytoplasm. It catalyses the reaction ATP-dependent cleavage of peptide bonds with broad specificity.. With respect to regulation, allosterically activated by HslU binding. Functionally, protease subunit of a proteasome-like degradation complex believed to be a general protein degrading machinery. This Rhizobium rhizogenes (strain K84 / ATCC BAA-868) (Agrobacterium radiobacter) protein is ATP-dependent protease subunit HslV.